A 545-amino-acid chain; its full sequence is Probable zinc metalloprotease EGY2, chloroplastic (545 aa).

Residues 1–63 (MQLPAMSCSP…QIRNRRFVCQ (63 aa)) constitute a chloroplast transit peptide. Residues 66-142 (TETEPDGDGN…DATPASDAQE (77 aa)) are disordered. The span at 68–85 (TEPDGDGNGDEEKEELGD) shows a compositional bias: acidic residues. Composition is skewed to polar residues over residues 88–109 (SSPSVYSVTQENGSAESETNAD) and 117–129 (NTEPLSSSDTVQN). Transmembrane regions (helical) follow at residues 256-276 (AVPEWFAAASFGVVTIFTLLL), 300-320 (VYGALVTAAIIGVHEIAHILA), 325-345 (GIKLAVPYFVPSWQIGSFGAI), 363-383 (AAGPLAGFSLGFVLLLLGFIL), 426-446 (PLVLWAWAGLLINAINSIPAG), 473-493 (LLGISALFNDVAFYWVVLIFF), and 513-533 (YISIGVAILLFGLLVCLPYPF).

It belongs to the peptidase M50B family.

Its subcellular location is the plastid. The protein resides in the chloroplast membrane. In terms of biological role, probable membrane-associated metalloprotease that may be involved in chloroplast development. The sequence is that of Probable zinc metalloprotease EGY2, chloroplastic (EGY2) from Oryza sativa subsp. indica (Rice).